The primary structure comprises 164 residues: Phosphopantetheine adenylyltransferase (164 aa).

T10 is a binding site for substrate. Residues 10-11 (TF) and H18 each bind ATP. Residues K44, L76, and R90 each coordinate substrate. Residues 91 to 93 (GLR), E101, and 126 to 132 (YAFISSS) each bind ATP.

It belongs to the bacterial CoaD family. Homohexamer. It depends on Mg(2+) as a cofactor.

It localises to the cytoplasm. The catalysed reaction is (R)-4'-phosphopantetheine + ATP + H(+) = 3'-dephospho-CoA + diphosphate. It functions in the pathway cofactor biosynthesis; coenzyme A biosynthesis; CoA from (R)-pantothenate: step 4/5. Functionally, reversibly transfers an adenylyl group from ATP to 4'-phosphopantetheine, yielding dephospho-CoA (dPCoA) and pyrophosphate. The sequence is that of Phosphopantetheine adenylyltransferase from Halorhodospira halophila (strain DSM 244 / SL1) (Ectothiorhodospira halophila (strain DSM 244 / SL1)).